The chain runs to 544 residues: Putative ligase Rv1013 (544 aa).

Lysine 528 is covalently cross-linked (Isoglutamyl lysine isopeptide (Lys-Gln) (interchain with Q-Cter in protein Pup)).

The protein belongs to the ATP-dependent AMP-binding enzyme family. Pupylated at Lys-528 by the prokaryotic ubiquitin-like protein Pup, which probably leads to its degradation by the proteasome.

The polypeptide is Putative ligase Rv1013 (pks16) (Mycobacterium tuberculosis (strain ATCC 25618 / H37Rv)).